Here is an 85-residue protein sequence, read N- to C-terminus: Probable oxaloacetate decarboxylase gamma chain (85 aa).

A helical membrane pass occupies residues 11 to 33; the sequence is AATLMVTGMAVVFIFLTILVYLV.

Belongs to the OadG family. As to quaternary structure, heterotrimer of an alpha, a beta and a gamma subunit. The cofactor is Na(+).

It is found in the cell membrane. It carries out the reaction oxaloacetate + 2 Na(+)(in) + H(+) = pyruvate + 2 Na(+)(out) + CO2. Catalyzes the decarboxylation of oxaloacetate coupled to Na(+) translocation. This is Probable oxaloacetate decarboxylase gamma chain from Vibrio parahaemolyticus serotype O3:K6 (strain RIMD 2210633).